Consider the following 788-residue polypeptide: Phenylalanine--tRNA ligase beta subunit (788 aa).

A tRNA-binding domain is found at 39–147 (FNVSGEIITA…DPVELGVNVV (109 aa)). The region spanning 399–472 (IEPKKVMLRK…RIYGYEKVES (74 aa)) is the B5 domain. 4 residues coordinate Mg(2+): Asp-450, Asp-456, Glu-459, and Glu-460. In terms of domain architecture, FDX-ACB spans 694–787 (PRFPAVRRDI…AEREFGIRRR (94 aa)).

The protein belongs to the phenylalanyl-tRNA synthetase beta subunit family. Type 1 subfamily. Tetramer of two alpha and two beta subunits. Mg(2+) serves as cofactor.

It is found in the cytoplasm. The enzyme catalyses tRNA(Phe) + L-phenylalanine + ATP = L-phenylalanyl-tRNA(Phe) + AMP + diphosphate + H(+). The sequence is that of Phenylalanine--tRNA ligase beta subunit (pheT) from Thermotoga maritima (strain ATCC 43589 / DSM 3109 / JCM 10099 / NBRC 100826 / MSB8).